Consider the following 195-residue polypeptide: Triosephosphate isomerase, cytosolic (195 aa).

His37 acts as the Electrophile in catalysis. Glu107 acts as the Proton acceptor in catalysis.

Belongs to the triosephosphate isomerase family. In terms of assembly, homodimer.

Its subcellular location is the cytoplasm. The catalysed reaction is D-glyceraldehyde 3-phosphate = dihydroxyacetone phosphate. Its pathway is carbohydrate biosynthesis; gluconeogenesis. It participates in carbohydrate degradation; glycolysis; D-glyceraldehyde 3-phosphate from glycerone phosphate: step 1/1. The polypeptide is Triosephosphate isomerase, cytosolic (Lactuca sativa (Garden lettuce)).